Reading from the N-terminus, the 371-residue chain is MDFQLQAVDKHARAGILNLVHSQVETPIFMPVGTQGCIKSLDAIDMQERLSAKLILANTYHMYLRPGEKVIEQLGGLHHFAQFHGSFLTDSGGFQAFSLSDNVKLQEDGIVFKSHLDGSKHFFTPTKVLDIQYSLNSDIMMVLDDLVGLPAPLKRLEESIKRSAKWANISLEYHKENNRPNNNLFAIIQGGTHLKMRSLSVGLTHGGFDGYAIGGLAVGESTNEMLETIAHTAPLLPKDKPRYLMGVGTPENILDAISLGVDMFDCVMPTRNARNATLFTHSGKISIKNAPYKLDNTPIEENCTCYTCKRYSKAYLHHLFRAKELTYARLASLHNLHFYLELVKNARNAILEKRFLSFKKEFLERYTMDRQ.

Aspartate 90 acts as the Proton acceptor in catalysis. Residues 90-94 (DSGGF), aspartate 144, glutamine 189, and glycine 215 contribute to the substrate site. The interval 246-252 (GVGTPEN) is RNA binding. The active-site Nucleophile is aspartate 265. The segment at 270-274 (TRNAR) is RNA binding; important for wobble base 34 recognition. 4 residues coordinate Zn(2+): cysteine 303, cysteine 305, cysteine 308, and histidine 334.

This sequence belongs to the queuine tRNA-ribosyltransferase family. In terms of assembly, homodimer. Within each dimer, one monomer is responsible for RNA recognition and catalysis, while the other monomer binds to the replacement base PreQ1. Zn(2+) serves as cofactor.

It catalyses the reaction 7-aminomethyl-7-carbaguanine + guanosine(34) in tRNA = 7-aminomethyl-7-carbaguanosine(34) in tRNA + guanine. Its pathway is tRNA modification; tRNA-queuosine biosynthesis. Functionally, catalyzes the base-exchange of a guanine (G) residue with the queuine precursor 7-aminomethyl-7-deazaguanine (PreQ1) at position 34 (anticodon wobble position) in tRNAs with GU(N) anticodons (tRNA-Asp, -Asn, -His and -Tyr). Catalysis occurs through a double-displacement mechanism. The nucleophile active site attacks the C1' of nucleotide 34 to detach the guanine base from the RNA, forming a covalent enzyme-RNA intermediate. The proton acceptor active site deprotonates the incoming PreQ1, allowing a nucleophilic attack on the C1' of the ribose to form the product. After dissociation, two additional enzymatic reactions on the tRNA convert PreQ1 to queuine (Q), resulting in the hypermodified nucleoside queuosine (7-(((4,5-cis-dihydroxy-2-cyclopenten-1-yl)amino)methyl)-7-deazaguanosine). This is Queuine tRNA-ribosyltransferase from Helicobacter acinonychis (strain Sheeba).